Here is a 228-residue protein sequence, read N- to C-terminus: Uracil-DNA glycosylase (228 aa).

Asp64 functions as the Proton acceptor in the catalytic mechanism.

It belongs to the uracil-DNA glycosylase (UDG) superfamily. UNG family.

It is found in the cytoplasm. The enzyme catalyses Hydrolyzes single-stranded DNA or mismatched double-stranded DNA and polynucleotides, releasing free uracil.. Excises uracil residues from the DNA which can arise as a result of misincorporation of dUMP residues by DNA polymerase or due to deamination of cytosine. The polypeptide is Uracil-DNA glycosylase (Yersinia pseudotuberculosis serotype IB (strain PB1/+)).